The sequence spans 185 residues: Elongation factor P (185 aa).

The protein belongs to the elongation factor P family.

It localises to the cytoplasm. It functions in the pathway protein biosynthesis; polypeptide chain elongation. Functionally, involved in peptide bond synthesis. Stimulates efficient translation and peptide-bond synthesis on native or reconstituted 70S ribosomes in vitro. Probably functions indirectly by altering the affinity of the ribosome for aminoacyl-tRNA, thus increasing their reactivity as acceptors for peptidyl transferase. This is Elongation factor P from Herpetosiphon aurantiacus (strain ATCC 23779 / DSM 785 / 114-95).